The chain runs to 239 residues: Norbelladine 4'-O-methyltransferase 3 (239 aa).

S-adenosyl-L-methionine contacts are provided by residues Val-55, Glu-77, 79–80, Ser-85, Asp-103, and Ala-132; that span reads GV. A divalent metal cation is bound at residue Asp-155. Asp-157 is an S-adenosyl-L-methionine binding site. A divalent metal cation contacts are provided by Asp-181 and Asn-182.

The protein belongs to the class I-like SAM-binding methyltransferase superfamily. Cation-dependent O-methyltransferase family. It depends on Mg(2+) as a cofactor.

The enzyme catalyses norbelladine + S-adenosyl-L-methionine = 4'-O-methylnorbelladine + S-adenosyl-L-homocysteine + H(+). It participates in alkaloid biosynthesis. Functionally, 4'-O-methyltransferase converting norbelladine to 4'-O-methylnorbelladine. 4'-O-methylnorbelladine is a precursor to all Amaryllidaceae alkaloids such as galanthamine, lycorine and haemanthamine, and including haemanthamine- and crinamine-type alkaloids, promising anticancer agents. The chain is Norbelladine 4'-O-methyltransferase 3 from Narcissus aff. pseudonarcissus MK-2014 (Daffodil).